The chain runs to 324 residues: UDP-N-acetylenolpyruvoylglucosamine reductase (324 aa).

Residues 36-211 (FRAGGLAELM…AEDKAKIRND (176 aa)) enclose the FAD-binding PCMH-type domain. Residue Arg-183 is part of the active site. Ser-232 functions as the Proton donor in the catalytic mechanism. The active site involves Glu-302.

It belongs to the MurB family. It depends on FAD as a cofactor.

It is found in the cytoplasm. It catalyses the reaction UDP-N-acetyl-alpha-D-muramate + NADP(+) = UDP-N-acetyl-3-O-(1-carboxyvinyl)-alpha-D-glucosamine + NADPH + H(+). Its pathway is cell wall biogenesis; peptidoglycan biosynthesis. Cell wall formation. The chain is UDP-N-acetylenolpyruvoylglucosamine reductase from Sinorhizobium medicae (strain WSM419) (Ensifer medicae).